The primary structure comprises 91 residues: UPF0250 protein NMC1112 (91 aa).

It belongs to the UPF0250 family.

The chain is UPF0250 protein NMC1112 from Neisseria meningitidis serogroup C / serotype 2a (strain ATCC 700532 / DSM 15464 / FAM18).